Here is a 181-residue protein sequence, read N- to C-terminus: RING-H2 finger protein ATL56 (181 aa).

The tract at residues 1–24 (MPPTNNYRISGEPPSTTPSHPPPK) is disordered. A compositionally biased stretch (pro residues) spans 15–24 (STTPSHPPPK). Residues 32–52 (LFLVGVIMFSIFFLFLVLIGI) form a helical membrane-spanning segment. The RING-type; atypical zinc-finger motif lies at 110–152 (CVVCFDGFRQGQWCRNLPGCGHVFHRKCVDTWLLKASTCPICR).

It belongs to the RING-type zinc finger family. ATL subfamily.

Its subcellular location is the membrane. It carries out the reaction S-ubiquitinyl-[E2 ubiquitin-conjugating enzyme]-L-cysteine + [acceptor protein]-L-lysine = [E2 ubiquitin-conjugating enzyme]-L-cysteine + N(6)-ubiquitinyl-[acceptor protein]-L-lysine.. It functions in the pathway protein modification; protein ubiquitination. This chain is RING-H2 finger protein ATL56 (ATL56), found in Arabidopsis thaliana (Mouse-ear cress).